The sequence spans 661 residues: Zinc finger protein 81 (661 aa).

A KRAB domain is found at 21–92 (VSFEDVTVDF…EGEAPHQSCS (72 aa)). A Glycyl lysine isopeptide (Lys-Gly) (interchain with G-Cter in SUMO2) cross-link involves residue K266. 12 C2H2-type zinc fingers span residues 330-352 (YICT…EKTH), 358-380 (YKCN…QTTH), 386-408 (FECS…QKIH), 414-436 (HKCS…QRIH), 442-464 (YICT…QRIH), 470-492 (YECS…KRIH), 498-520 (YICT…QKSH), 526-548 (YICA…QTIH), 554-576 (YVCA…QRIH), 582-604 (YKCP…QRIH), 610-632 (YICA…QTIH), and 638-660 (YKCS…RNIH).

It belongs to the krueppel C2H2-type zinc-finger protein family.

Its subcellular location is the nucleus. In terms of biological role, may be involved in transcriptional regulation. The polypeptide is Zinc finger protein 81 (ZNF81) (Homo sapiens (Human)).